Consider the following 286-residue polypeptide: Beta-glucanase (286 aa).

An N-terminal signal peptide occupies residues 1–30 (MCTMPLMKLKKMMRRTAFLLSVLIGCSMLG). Residues 48-286 (FDYSGLPDPE…DYVRVYRWVE (239 aa)) enclose the GH16 domain. The active-site Nucleophile is the Glu-158. The active-site Proton donor is Glu-163.

This sequence belongs to the glycosyl hydrolase 16 family.

The catalysed reaction is Hydrolysis of (1-&gt;4)-beta-D-glucosidic linkages in beta-D-glucans containing (1-&gt;3)- and (1-&gt;4)-bonds.. Functionally, shows activity on lichenan, beta-glucan and laminarin but not on CMC cellulose or xylan. The protein is Beta-glucanase (bglA) of Rhodothermus marinus (Rhodothermus obamensis).